We begin with the raw amino-acid sequence, 557 residues long: Aspartate--tRNA ligase, cytoplasmic (557 aa).

Residues Met-1 to Glu-12 show a composition bias toward basic and acidic residues. Residues Met-1–Asn-74 form a disordered region. Position 2 is an N-acetylserine (Ser-2). Phosphoserine is present on Ser-14. Residues Leu-37 to Asn-74 are compositionally biased toward basic and acidic residues. Glu-281 is a binding site for L-aspartate. Phosphoserine is present on Ser-301. The segment at Gln-303 to Lys-306 is aspartate. Arg-325 lines the L-aspartate pocket. ATP is bound by residues Arg-325 to Glu-327, Arg-333 to Met-335, and Glu-478. L-aspartate-binding residues include Ser-481 and Arg-485. Ser-502 carries the phosphoserine modification. Gly-528–Arg-531 is a binding site for ATP. A Phosphoserine modification is found at Ser-546.

Belongs to the class-II aminoacyl-tRNA synthetase family. Type 2 subfamily. In terms of assembly, homodimer.

The protein resides in the cytoplasm. It carries out the reaction tRNA(Asp) + L-aspartate + ATP = L-aspartyl-tRNA(Asp) + AMP + diphosphate. In Saccharomyces cerevisiae (strain ATCC 204508 / S288c) (Baker's yeast), this protein is Aspartate--tRNA ligase, cytoplasmic (DPS1).